A 537-amino-acid chain; its full sequence is Methionine--tRNA ligase (537 aa).

Positions 11-21 match the 'HIGH' region motif; sequence AYPNAAPHIGH. A 'KMSKS' region motif is present at residues 301-305; sequence KMSKS. Lys304 serves as a coordination point for ATP. Positions 503-537 are disordered; that stretch reads PPPTGVFPRYQPSEIEGADPVKSSSKRREHNKRRE. Positions 526-537 are enriched in basic residues; the sequence is SSKRREHNKRRE.

Belongs to the class-I aminoacyl-tRNA synthetase family. MetG type 2B subfamily. As to quaternary structure, monomer.

Its subcellular location is the cytoplasm. The enzyme catalyses tRNA(Met) + L-methionine + ATP = L-methionyl-tRNA(Met) + AMP + diphosphate. In terms of biological role, is required not only for elongation of protein synthesis but also for the initiation of all mRNA translation through initiator tRNA(fMet) aminoacylation. The polypeptide is Methionine--tRNA ligase (Mycobacterium leprae (strain TN)).